Consider the following 623-residue polypeptide: Immunity-related GTPase family Q protein (623 aa).

Residues cysteine 152 and cysteine 158 are joined by a disulfide bond. The stretch at 155-180 (SDGCEELERLRAALQSQAEALRRLLP) forms a coiled coil. An LIR 1 motif is present at residues 186 to 189 (FEVL). A Phosphothreonine modification is found at threonine 203. The IRG-type G domain occupies 223–449 (ARLDLAVAGK…PGLCEWLRRA (227 aa)). Residues 334 to 393 (EGEDPECLGEGKMENPKGESLKNAGGGGLENALSKGREKCSAGSQKAGSGEGPGKAGSEG) are disordered. Over residues 342-353 (GEGKMENPKGES) the composition is skewed to basic and acidic residues. The LIR 2 signature appears at 421 to 424 (WEVL).

It belongs to the TRAFAC class dynamin-like GTPase superfamily. IRG family. In terms of assembly, interacts (via LIR motif 1) with GABARAPL2. Interacts (via LIR motif 2) with MAP1LC3B/LC3B.

The protein resides in the lysosome. The protein localises to the cytoplasmic vesicle. It localises to the autophagosome. Autophagy receptor that specifically promotes clearance of misfolded MHC class I molecules by targeting them to the lysosome for degradation. Acts as a molecular adapter that specifically recognizes and binds (1) misfolded MHC class I molecules following their ubiquitination, as well as (2) autophagy-related proteins, promoting the recruitment of misfolded MHC class I molecules to autophagy machinery for degradation. Degradation of misfolded MHC class I molecules is essential to prevent accumulation of defective MHC class I complexes at the surface of CD8(+) T-cells and prevent a stronger T-cell-mediated response. In contrast to other members of the family, does not show GTPase activity. This is Immunity-related GTPase family Q protein from Homo sapiens (Human).